The primary structure comprises 365 residues: Uroporphyrinogen decarboxylase (365 aa).

Residues 1-17 (MSANDSPSGQQTTTSAS) are compositionally biased toward polar residues. Residues 1–20 (MSANDSPSGQQTTTSASLDA) form a disordered region. Substrate is bound by residues 48 to 52 (RQAGR), Asp-97, Tyr-172, Ser-227, and His-341.

This sequence belongs to the uroporphyrinogen decarboxylase family. As to quaternary structure, homodimer.

It is found in the cytoplasm. It carries out the reaction uroporphyrinogen III + 4 H(+) = coproporphyrinogen III + 4 CO2. Its pathway is porphyrin-containing compound metabolism; protoporphyrin-IX biosynthesis; coproporphyrinogen-III from 5-aminolevulinate: step 4/4. Functionally, catalyzes the decarboxylation of four acetate groups of uroporphyrinogen-III to yield coproporphyrinogen-III. The polypeptide is Uroporphyrinogen decarboxylase (Streptomyces griseus subsp. griseus (strain JCM 4626 / CBS 651.72 / NBRC 13350 / KCC S-0626 / ISP 5235)).